Consider the following 133-residue polypeptide: Small ribosomal subunit protein uS8 (133 aa).

This sequence belongs to the universal ribosomal protein uS8 family. Part of the 30S ribosomal subunit. Contacts proteins S5 and S12.

Its function is as follows. One of the primary rRNA binding proteins, it binds directly to 16S rRNA central domain where it helps coordinate assembly of the platform of the 30S subunit. This Gloeobacter violaceus (strain ATCC 29082 / PCC 7421) protein is Small ribosomal subunit protein uS8.